We begin with the raw amino-acid sequence, 463 residues long: uncharacterized protein (463 aa).

It belongs to the mycobacterial PPE family.

This is an uncharacterized protein from Mycobacterium tuberculosis (strain ATCC 25618 / H37Rv).